The primary structure comprises 581 residues: 2-succinyl-5-enolpyruvyl-6-hydroxy-3-cyclohexene-1-carboxylate synthase (581 aa).

This sequence belongs to the TPP enzyme family. MenD subfamily. As to quaternary structure, homodimer. The cofactor is Mg(2+). Requires Mn(2+) as cofactor. It depends on thiamine diphosphate as a cofactor.

The enzyme catalyses isochorismate + 2-oxoglutarate + H(+) = 5-enolpyruvoyl-6-hydroxy-2-succinyl-cyclohex-3-ene-1-carboxylate + CO2. The protein operates within quinol/quinone metabolism; 1,4-dihydroxy-2-naphthoate biosynthesis; 1,4-dihydroxy-2-naphthoate from chorismate: step 2/7. It functions in the pathway quinol/quinone metabolism; menaquinone biosynthesis. Catalyzes the thiamine diphosphate-dependent decarboxylation of 2-oxoglutarate and the subsequent addition of the resulting succinic semialdehyde-thiamine pyrophosphate anion to isochorismate to yield 2-succinyl-5-enolpyruvyl-6-hydroxy-3-cyclohexene-1-carboxylate (SEPHCHC). This is 2-succinyl-5-enolpyruvyl-6-hydroxy-3-cyclohexene-1-carboxylate synthase from Chlorobium phaeobacteroides (strain BS1).